A 94-amino-acid chain; its full sequence is Small ribosomal subunit protein uS19 (94 aa).

This sequence belongs to the universal ribosomal protein uS19 family.

Functionally, protein S19 forms a complex with S13 that binds strongly to the 16S ribosomal RNA. The protein is Small ribosomal subunit protein uS19 of Endomicrobium trichonymphae.